Reading from the N-terminus, the 218-residue chain is Probable transaldolase (218 aa).

Catalysis depends on Lys87, which acts as the Schiff-base intermediate with substrate.

Belongs to the transaldolase family. Type 3B subfamily.

It is found in the cytoplasm. The catalysed reaction is D-sedoheptulose 7-phosphate + D-glyceraldehyde 3-phosphate = D-erythrose 4-phosphate + beta-D-fructose 6-phosphate. The protein operates within carbohydrate degradation; pentose phosphate pathway; D-glyceraldehyde 3-phosphate and beta-D-fructose 6-phosphate from D-ribose 5-phosphate and D-xylulose 5-phosphate (non-oxidative stage): step 2/3. In terms of biological role, transaldolase is important for the balance of metabolites in the pentose-phosphate pathway. The polypeptide is Probable transaldolase (Flavobacterium psychrophilum (strain ATCC 49511 / DSM 21280 / CIP 103535 / JIP02/86)).